A 207-amino-acid chain; its full sequence is 3-hexulose-6-phosphate synthase (207 aa).

The protein belongs to the HPS/KGPDC family. HPS subfamily.

It catalyses the reaction D-ribulose 5-phosphate + formaldehyde = D-arabino-hex-3-ulose 6-phosphate. It functions in the pathway one-carbon metabolism; formaldehyde assimilation via RuMP pathway; D-fructose 6-phosphate from D-ribulose 5-phosphate and formaldehyde: step 1/2. Functionally, catalyzes the condensation of ribulose 5-phosphate with formaldehyde to form 3-hexulose 6-phosphate. The chain is 3-hexulose-6-phosphate synthase (rmpA) from Mycobacterium gastri.